A 298-amino-acid polypeptide reads, in one-letter code: Lipoyl synthase 1 (298 aa).

[4Fe-4S] cluster contacts are provided by cysteine 34, cysteine 39, cysteine 45, cysteine 60, cysteine 64, cysteine 67, and serine 274. The Radical SAM core domain occupies 46–263; it reads FKAGTATFLI…RRAGEGMGFL (218 aa). The tract at residues 277–298 is disordered; that stretch reads AEQVQRLMRSHPRTPKNQHSPE.

It belongs to the radical SAM superfamily. Lipoyl synthase family. [4Fe-4S] cluster is required as a cofactor.

Its subcellular location is the cytoplasm. It carries out the reaction [[Fe-S] cluster scaffold protein carrying a second [4Fe-4S](2+) cluster] + N(6)-octanoyl-L-lysyl-[protein] + 2 oxidized [2Fe-2S]-[ferredoxin] + 2 S-adenosyl-L-methionine + 4 H(+) = [[Fe-S] cluster scaffold protein] + N(6)-[(R)-dihydrolipoyl]-L-lysyl-[protein] + 4 Fe(3+) + 2 hydrogen sulfide + 2 5'-deoxyadenosine + 2 L-methionine + 2 reduced [2Fe-2S]-[ferredoxin]. It functions in the pathway protein modification; protein lipoylation via endogenous pathway; protein N(6)-(lipoyl)lysine from octanoyl-[acyl-carrier-protein]: step 2/2. Functionally, catalyzes the radical-mediated insertion of two sulfur atoms into the C-6 and C-8 positions of the octanoyl moiety bound to the lipoyl domains of lipoate-dependent enzymes, thereby converting the octanoylated domains into lipoylated derivatives. This Gloeobacter violaceus (strain ATCC 29082 / PCC 7421) protein is Lipoyl synthase 1.